A 114-amino-acid chain; its full sequence is Protein U68 (114 aa).

The protein belongs to the herpesviridae UL96 family.

This chain is Protein U68 (U68), found in Homo sapiens (Human).